The chain runs to 97 residues: Sperm-associated acrosin inhibitor (97 aa).

Positions 1–26 (MAFFSSRVRALFILVLVLPLCSETGF) are cleaved as a signal peptide. Positions 32 to 90 (TRKEPDCDVYRSHLFFCTREMDPICGTNGKSYANPCIFCSEKLGRNEKFDFGHWGHCRE) constitute a Kazal-like domain. 3 disulfide bridges follow: Cys38/Cys70, Cys48/Cys67, and Cys56/Cys88.

As to expression, seminal plasma.

Its subcellular location is the secreted. In terms of biological role, inhibits acrosin. The protein is Sperm-associated acrosin inhibitor of Sus scrofa (Pig).